Reading from the N-terminus, the 307-residue chain is Taste receptor type 2 member 41 (307 aa).

Over 1–7 the chain is Extracellular; sequence MQAALTA. The helical transmembrane segment at 8-28 threads the bilayer; the sequence is FFMLLFSLLSLLGIAANGFIV. Residues 29–40 are Cytoplasmic-facing; the sequence is LVLGREWLRYGR. The helical transmembrane segment at 41 to 61 threads the bilayer; that stretch reads LLPLDMILISLGASRFCLQLV. The Extracellular segment spans residues 62–88; the sequence is GTVHNFYYSAQKVEYSGGLGRQFFHLH. A helical transmembrane segment spans residues 89 to 109; that stretch reads WHFLNSATFWFCSWLSVLFCV. Residues 110-129 are Cytoplasmic-facing; that stretch reads KIANITHPTFLWLKWRFPAW. The helical transmembrane segment at 130-150 threads the bilayer; it reads VPWLLLGSVLISFIITLLFFW. Over 151–183 the chain is Extracellular; it reads VNYPAYQEFLIRKFSVNMTYKWNTRIETYYFPS. A glycan (N-linked (GlcNAc...) asparagine) is linked at N167. A helical membrane pass occupies residues 184–204; it reads LKLVIWSIPFSVFLVSIMLLI. Residues 205–234 lie on the Cytoplasmic side of the membrane; the sequence is NSLRRHTQRMQHNGHSLQDPSTQAHTRALK. Residues 235-255 traverse the membrane as a helical segment; the sequence is SLISFLILYALSFLSLIIDAT. At 256-264 the chain is on the extracellular side; the sequence is KFISMQNDF. A helical transmembrane segment spans residues 265 to 285; the sequence is YWPWQIAVYLCISIHPFILIF. The Cytoplasmic segment spans residues 286–307; that stretch reads SNLKLRSVFSQLLLLARGFWVA.

This sequence belongs to the G-protein coupled receptor T2R family.

The protein resides in the membrane. Receptor that may play a role in the perception of bitterness and is gustducin-linked. May play a role in sensing the chemical composition of the gastrointestinal content. The activity of this receptor may stimulate alpha gustducin, mediate PLC-beta-2 activation and lead to the gating of TRPM5. The protein is Taste receptor type 2 member 41 (TAS2R41) of Pan paniscus (Pygmy chimpanzee).